The following is a 204-amino-acid chain: Nucleoside triphosphate pyrophosphatase (204 aa).

D78 serves as the catalytic Proton acceptor.

Belongs to the Maf family. It depends on a divalent metal cation as a cofactor.

The protein resides in the cytoplasm. It catalyses the reaction a ribonucleoside 5'-triphosphate + H2O = a ribonucleoside 5'-phosphate + diphosphate + H(+). The catalysed reaction is a 2'-deoxyribonucleoside 5'-triphosphate + H2O = a 2'-deoxyribonucleoside 5'-phosphate + diphosphate + H(+). Nucleoside triphosphate pyrophosphatase. May have a dual role in cell division arrest and in preventing the incorporation of modified nucleotides into cellular nucleic acids. This is Nucleoside triphosphate pyrophosphatase from Prochlorococcus marinus (strain MIT 9215).